The chain runs to 317 residues: Acetyl-coenzyme A carboxylase carboxyl transferase subunit alpha (317 aa).

One can recognise a CoA carboxyltransferase C-terminal domain in the interval 43–293 (RVRESMADIY…GDVISNALGE (251 aa)).

The protein belongs to the AccA family. Acetyl-CoA carboxylase is a heterohexamer composed of biotin carboxyl carrier protein (AccB), biotin carboxylase (AccC) and two subunits each of ACCase subunit alpha (AccA) and ACCase subunit beta (AccD).

Its subcellular location is the cytoplasm. The catalysed reaction is N(6)-carboxybiotinyl-L-lysyl-[protein] + acetyl-CoA = N(6)-biotinyl-L-lysyl-[protein] + malonyl-CoA. It functions in the pathway lipid metabolism; malonyl-CoA biosynthesis; malonyl-CoA from acetyl-CoA: step 1/1. In terms of biological role, component of the acetyl coenzyme A carboxylase (ACC) complex. First, biotin carboxylase catalyzes the carboxylation of biotin on its carrier protein (BCCP) and then the CO(2) group is transferred by the carboxyltransferase to acetyl-CoA to form malonyl-CoA. The protein is Acetyl-coenzyme A carboxylase carboxyl transferase subunit alpha of Rhizobium rhizogenes (strain K84 / ATCC BAA-868) (Agrobacterium radiobacter).